The chain runs to 67 residues: UPF0253 protein VV2574 (67 aa).

Belongs to the UPF0253 family.

The polypeptide is UPF0253 protein VV2574 (Vibrio vulnificus (strain YJ016)).